A 2090-amino-acid chain; its full sequence is Nuclear pore complex protein Nup205 (2090 aa).

The protein belongs to the NUP186/NUP192/NUP205 family. In terms of assembly, part of the nuclear pore complex (NPC).

The protein localises to the nucleus. The protein resides in the nuclear pore complex. Plays a role in the nuclear pore complex (NPC) assembly and maintenance, but with limited role in NPC permeability. Required for specific nuclear import pathways such as Mad import. The sequence is that of Nuclear pore complex protein Nup205 from Drosophila melanogaster (Fruit fly).